Here is a 368-residue protein sequence, read N- to C-terminus: Branched-chain-amino-acid aminotransferase (368 aa).

R101 is a binding site for pyridoxal 5'-phosphate. Residue K204 is modified to N6-(pyridoxal phosphate)lysine. Pyridoxal 5'-phosphate is bound by residues Y209 and 271 to 272 (IT). K299 participates in a covalent cross-link: Isoglutamyl lysine isopeptide (Lys-Gln) (interchain with Q-Cter in protein Pup). T314 contributes to the pyridoxal 5'-phosphate binding site.

The protein belongs to the class-IV pyridoxal-phosphate-dependent aminotransferase family. In terms of assembly, homodimer. It depends on pyridoxal 5'-phosphate as a cofactor.

The enzyme catalyses L-isoleucine + 2-oxoglutarate = (S)-3-methyl-2-oxopentanoate + L-glutamate. It catalyses the reaction L-valine + 2-oxoglutarate = 3-methyl-2-oxobutanoate + L-glutamate. It carries out the reaction L-leucine + 2-oxoglutarate = 4-methyl-2-oxopentanoate + L-glutamate. It participates in amino-acid biosynthesis; L-isoleucine biosynthesis; L-isoleucine from 2-oxobutanoate: step 4/4. It functions in the pathway amino-acid biosynthesis; L-leucine biosynthesis; L-leucine from 3-methyl-2-oxobutanoate: step 4/4. Its pathway is amino-acid biosynthesis; L-valine biosynthesis; L-valine from pyruvate: step 4/4. Inhibited by ammonium sulfate at millimolar concentrations and by O-benzylhydroxylamine (Obe). Catalyzes the reversible transfers of an amino group from glutamate to the alpha-ketoacid of the respective amino acid in the final step in the biosynthesis of branchedchain amino acids. The amino acids can be ranked in the following order with respect to their efficiency as amino donor: Leu &gt; Ile &gt; Val. In Mycolicibacterium smegmatis (strain ATCC 700084 / mc(2)155) (Mycobacterium smegmatis), this protein is Branched-chain-amino-acid aminotransferase (ilvE).